Here is a 271-residue protein sequence, read N- to C-terminus: tRNA (guanine-N(1)-)-methyltransferase (271 aa).

Residues glycine 120 and 145-150 contribute to the S-adenosyl-L-methionine site; that span reads IGDYVL.

It belongs to the RNA methyltransferase TrmD family. As to quaternary structure, homodimer.

The protein resides in the cytoplasm. The enzyme catalyses guanosine(37) in tRNA + S-adenosyl-L-methionine = N(1)-methylguanosine(37) in tRNA + S-adenosyl-L-homocysteine + H(+). In terms of biological role, specifically methylates guanosine-37 in various tRNAs. The sequence is that of tRNA (guanine-N(1)-)-methyltransferase from Bifidobacterium longum (strain NCC 2705).